Here is a 261-residue protein sequence, read N- to C-terminus: Follistatin-related protein 3 (261 aa).

An N-terminal signal peptide occupies residues 1–26 (MRPRAPGPLWPLPWGALAWAVGFVGS). Residues 36-107 (GVCWLQQGRE…SCEGVECGPG (72 aa)) form the TB domain. Intrachain disulfides connect Cys38–Cys61, Cys48–Cys92, Cys62–Cys95, Cys99–Cys110, Cys104–Cys119, Cys121–Cys153, Cys125–Cys146, and Cys135–Cys167. The N-linked (GlcNAc...) asparagine glycan is linked to Asn73. A Follistatin-like 1 domain is found at 99-119 (CEGVECGPGKACRMLGGRPRC). Kazal-like domains lie at 113-169 (LGGR…RCRK) and 189-245 (SAHC…SCAG). Residues 170–193 (SCAHVVCLRPQSCVVDQTGSAHCV) enclose the Follistatin-like 2 domain. Intrachain disulfides connect Cys195-Cys229, Cys200-Cys222, and Cys211-Cys243. N-linked (GlcNAc...) asparagine glycosylation occurs at Asn215. The tract at residues 242-261 (SCAGTPEPLDPESEEEENFV) is disordered. The span at 250–261 (LDPESEEEENFV) shows a compositional bias: acidic residues.

Interacts with INHBA and INHBB. Interacts with FN1. Interacts with ADAM12. Interacts with MLLT10; the interaction enhances MLLT10 in vitro transcriptional activity and self-association. Interacts with MSTN.

Its subcellular location is the secreted. It is found in the nucleus. In terms of biological role, the secreted form is a binding and antagonizing protein for members of the TGF-beta family, such as activin, BMP2 and MSTN. Inhibits activin A-, activin B-, BMP2- and MSDT-induced cellular signaling; more effective on activin A than on activin B. Involved in bone formation; inhibits osteoclast differentiation. Involved in hematopoiesis; involved in differentiation of hemopoietic progenitor cells, increases hematopoietic cell adhesion to fibronectin and seems to contribute to the adhesion of hematopoietic precursor cells to the bone marrow stroma. The nuclear form is probably involved in transcriptional regulation via interaction with MLLT10. In Bos taurus (Bovine), this protein is Follistatin-related protein 3 (FSTL3).